We begin with the raw amino-acid sequence, 673 residues long: Auxin response factor 9 (673 aa).

A DNA-binding region (TF-B3) is located at residues phenylalanine 126–methionine 228. Disordered regions lie at residues glutamate 356–valine 386 and aspartate 514–glutamine 545. Polar residues predominate over residues aspartate 516 to glutamine 545. Residues arginine 547–serine 639 form the PB1 domain.

Belongs to the ARF family. In terms of assembly, homodimers and heterodimers. As to expression, expressed in roots, culms, leaves and young panicles.

The protein localises to the nucleus. Functionally, auxin response factors (ARFs) are transcriptional factors that bind specifically to the DNA sequence 5'-TGTCTC-3' found in the auxin-responsive promoter elements (AuxREs). The chain is Auxin response factor 9 (ARF9) from Oryza sativa subsp. japonica (Rice).